The following is a 425-amino-acid chain: Serine--tRNA ligase (425 aa).

L-serine is bound at residue 230–232 (TAE). Residue 261–263 (RSE) coordinates ATP. Residue Glu-284 coordinates L-serine. Position 348 to 351 (348 to 351 (EISS)) interacts with ATP. Ser-384 is an L-serine binding site.

The protein belongs to the class-II aminoacyl-tRNA synthetase family. Type-1 seryl-tRNA synthetase subfamily. In terms of assembly, homodimer. The tRNA molecule binds across the dimer.

The protein resides in the cytoplasm. It carries out the reaction tRNA(Ser) + L-serine + ATP = L-seryl-tRNA(Ser) + AMP + diphosphate + H(+). The catalysed reaction is tRNA(Sec) + L-serine + ATP = L-seryl-tRNA(Sec) + AMP + diphosphate + H(+). It participates in aminoacyl-tRNA biosynthesis; selenocysteinyl-tRNA(Sec) biosynthesis; L-seryl-tRNA(Sec) from L-serine and tRNA(Sec): step 1/1. In terms of biological role, catalyzes the attachment of serine to tRNA(Ser). Is also able to aminoacylate tRNA(Sec) with serine, to form the misacylated tRNA L-seryl-tRNA(Sec), which will be further converted into selenocysteinyl-tRNA(Sec). This is Serine--tRNA ligase from Nitratidesulfovibrio vulgaris (strain DSM 19637 / Miyazaki F) (Desulfovibrio vulgaris).